The sequence spans 189 residues: Putative ankyrin repeat protein L38 (189 aa).

One copy of the ANK repeat lies at 108 to 137 (YGKTPLITAIKSGNCIMVKKLIDYGADFNK).

The protein is Putative ankyrin repeat protein L38 of Acanthamoeba polyphaga mimivirus (APMV).